The sequence spans 179 residues: ATP synthase subunit b (179 aa).

A helical membrane pass occupies residues 26–46; it reads FLEANLFNLAILLGIIIYYAP.

Belongs to the ATPase B chain family. In terms of assembly, F-type ATPases have 2 components, F(1) - the catalytic core - and F(0) - the membrane proton channel. F(1) has five subunits: alpha(3), beta(3), gamma(1), delta(1), epsilon(1). F(0) has four main subunits: a(1), b(1), b'(1) and c(10-14). The alpha and beta chains form an alternating ring which encloses part of the gamma chain. F(1) is attached to F(0) by a central stalk formed by the gamma and epsilon chains, while a peripheral stalk is formed by the delta, b and b' chains.

It is found in the cellular thylakoid membrane. F(1)F(0) ATP synthase produces ATP from ADP in the presence of a proton or sodium gradient. F-type ATPases consist of two structural domains, F(1) containing the extramembraneous catalytic core and F(0) containing the membrane proton channel, linked together by a central stalk and a peripheral stalk. During catalysis, ATP synthesis in the catalytic domain of F(1) is coupled via a rotary mechanism of the central stalk subunits to proton translocation. Its function is as follows. Component of the F(0) channel, it forms part of the peripheral stalk, linking F(1) to F(0). The protein is ATP synthase subunit b of Synechocystis sp. (strain ATCC 27184 / PCC 6803 / Kazusa).